Here is a 91-residue protein sequence, read N- to C-terminus: MRREALKNAVLKIMTEKMELKNVTHLEETMRLNQDLYIDSVMMLQLIVYIEMDVKLCVPEDEVDPKAFLTVGSLLDFMEELQPLQDVNVNN.

The Carrier domain occupies 4–82 (EALKNAVLKI…SLLDFMEELQ (79 aa)). Serine 40 carries the O-(pantetheine 4'-phosphoryl)serine modification.

The protein belongs to the acyl carrier protein (ACP) family. Post-translationally, activated by the transfer of a 4'-phosphopantetheine group from CoA to Ser-40.

Its pathway is siderophore biosynthesis; petrobactin biosynthesis. Functionally, involved in the biosynthesis of petrobactin, a catecholate siderophore that functions in both iron acquisition and virulence. Aryl-carrier protein that activates 3,4-dihydroxybenzoate (3,4-DHBA) prior to its incorporation into petrobactin. The polypeptide is Acyl carrier protein AsbD (Bacillus anthracis).